The sequence spans 443 residues: Exodeoxyribonuclease 7 large subunit (443 aa).

This sequence belongs to the XseA family. Heterooligomer composed of large and small subunits.

The protein localises to the cytoplasm. It catalyses the reaction Exonucleolytic cleavage in either 5'- to 3'- or 3'- to 5'-direction to yield nucleoside 5'-phosphates.. Bidirectionally degrades single-stranded DNA into large acid-insoluble oligonucleotides, which are then degraded further into small acid-soluble oligonucleotides. The protein is Exodeoxyribonuclease 7 large subunit of Vibrio vulnificus (strain YJ016).